The sequence spans 275 residues: Diaminopimelate epimerase (275 aa).

N12, Q45, and N65 together coordinate substrate. Residue C74 is the Proton donor of the active site. Substrate contacts are provided by residues 75-76 (GN), N158, N191, and 209-210 (ER). The active-site Proton acceptor is the C218. Position 219–220 (219–220 (GT)) interacts with substrate.

Belongs to the diaminopimelate epimerase family. In terms of assembly, homodimer.

The protein localises to the cytoplasm. It carries out the reaction (2S,6S)-2,6-diaminopimelate = meso-2,6-diaminopimelate. It participates in amino-acid biosynthesis; L-lysine biosynthesis via DAP pathway; DL-2,6-diaminopimelate from LL-2,6-diaminopimelate: step 1/1. In terms of biological role, catalyzes the stereoinversion of LL-2,6-diaminopimelate (L,L-DAP) to meso-diaminopimelate (meso-DAP), a precursor of L-lysine and an essential component of the bacterial peptidoglycan. In Shewanella denitrificans (strain OS217 / ATCC BAA-1090 / DSM 15013), this protein is Diaminopimelate epimerase.